Here is a 514-residue protein sequence, read N- to C-terminus: Peptide chain release factor 3 (514 aa).

Residues 8 to 268 (KKRRTFAIIS…TFLEFAPEPH (261 aa)) form the tr-type G domain. Residues 17–24 (SHPDAGKT), 85–89 (DTPGH), and 139–142 (NKLD) each bind GTP.

The protein belongs to the TRAFAC class translation factor GTPase superfamily. Classic translation factor GTPase family. PrfC subfamily.

It localises to the cytoplasm. Functionally, increases the formation of ribosomal termination complexes and stimulates activities of RF-1 and RF-2. It binds guanine nucleotides and has strong preference for UGA stop codons. It may interact directly with the ribosome. The stimulation of RF-1 and RF-2 is significantly reduced by GTP and GDP, but not by GMP. This Streptococcus pyogenes serotype M5 (strain Manfredo) protein is Peptide chain release factor 3.